Reading from the N-terminus, the 304-residue chain is Insulin-like growth factor 1 receptor (304 aa).

Fibronectin type-III domains are found at residues 1–43 and 49–142; these read ERTV…TMPA and IPGP…VQAK. Topologically, residues 1–147 are extracellular; it reads ERTVISNLRP…YVQAKTTYEN (147 aa). N-linked (GlcNAc...) asparagine glycosylation is found at asparagine 115 and asparagine 128. The helical transmembrane segment at 148–168 threads the bilayer; the sequence is FIHLIIALPVAVLLIVGGLVI. The Cytoplasmic portion of the chain corresponds to 169–304; it reads MLYVFHRKRN…HMNGGRKNER (136 aa). A Phosphoserine; by GSK3-beta modification is found at serine 225. A Phosphoserine modification is found at serine 229. Residues 231–304 are disordered; it reads ENKPPEPEEL…HMNGGRKNER (74 aa). A compositionally biased stretch (acidic residues) spans 237 to 246; it reads PEELDLEPEN. Positions 247-263 are enriched in low complexity; that stretch reads MESVPLDPSASSSSLPL. Over residues 264 to 273 the composition is skewed to basic and acidic residues; it reads PDRHSGHKAE.

It belongs to the protein kinase superfamily. Tyr protein kinase family. Insulin receptor subfamily. In terms of assembly, tetramer of 2 alpha and 2 beta chains linked by disulfide bonds. The alpha chains contribute to the formation of the ligand-binding domain, while the beta chain carries the kinase domain. Forms a hybrid receptor with INSR, the hybrid is a tetramer consisting of 1 alpha chain and 1 beta chain of INSR and 1 alpha chain and 1 beta chain of IGF1R. Interacts with ARRB1 and ARRB2. Interacts with GRB10. Interacts with RACK1. Interacts with SOCS1, SOCS2 and SOCS3. Interacts with 14-3-3 proteins. Interacts with NMD2. Interacts with MAP3K5. Interacts with STAT3. Found in a ternary complex with IGF1 and ITGAV:ITGB3 or ITGA6:ITGB4. Interacts (nascent precursor form) with ZFAND2B. Post-translationally, autophosphorylated on tyrosine residues in response to ligand binding. Autophosphorylation occurs in trans, i.e. one subunit of the dimeric receptor phosphorylates tyrosine residues on the other subunit. Autophosphorylation occurs in a sequential manner. While every single phosphorylation increases kinase activity, all three tyrosine residues in the kinase activation loop have to be phosphorylated for optimal activity. Can be autophosphorylated at additional tyrosine residues (in vitro). May also be phosphorylated at tyrosine residues by mTORC2. Autophosphorylated is followed by phosphorylation of juxtamembrane tyrosines and C-terminal serines. Phosphorylation of Ser-225 by GSK-3beta restrains kinase activity and promotes cell surface expression, it requires a priming phosphorylation at Ser-229. Dephosphorylated by PTPN1. In terms of processing, polyubiquitinated in the activation loop through both 'Lys-48' and 'Lys-29' linkages, promoting receptor endocytosis and subsequent degradation by the proteasome. Ubiquitination is facilitated by pre-existing phosphorylation. Sumoylated with SUMO1. Post-translationally, controlled by regulated intramembrane proteolysis (RIP). Undergoes metalloprotease-dependent constitutive ectodomain shedding to produce a membrane-anchored 52 kDa C-Terminal fragment which is further processed by presenilin gamma-secretase to yield an intracellular 50 kDa fragment.

It localises to the cell membrane. It carries out the reaction L-tyrosyl-[protein] + ATP = O-phospho-L-tyrosyl-[protein] + ADP + H(+). Its activity is regulated as follows. Activated by autophosphorylation at tyrosines in the kinase activation loop; phosphorylation at all three tyrosine residues is required for optimal kinase activity. Inhibited by MSC1609119A-1, BMS-754807, PQIP, benzimidazole pyridinone, isoquinolinedione, bis-azaindole, 3-cyanoquinoline, 2,4-bis-arylamino-1,3-pyrimidine, pyrrolopyrimidine, pyrrole-5-carboxaldehyde, picropodophyllin (PPP), tyrphostin derivatives. While most inhibitors bind to the ATP binding pocket, MSC1609119A-1 functions as allosteric inhibitor and binds close to the DFG motif and the activation loop. Its function is as follows. Receptor tyrosine kinase which mediates actions of insulin-like growth factor 1 (IGF1). Binds IGF1 with high affinity and IGF2 and insulin (INS) with a lower affinity. The activated IGF1R is involved in cell growth and survival control. IGF1R is crucial for tumor transformation and survival of malignant cell. Ligand binding activates the receptor kinase, leading to receptor autophosphorylation, and tyrosines phosphorylation of multiple substrates, that function as signaling adapter proteins including, the insulin-receptor substrates (IRS1/2), Shc and 14-3-3 proteins. Phosphorylation of IRSs proteins lead to the activation of two main signaling pathways: the PI3K-AKT/PKB pathway and the Ras-MAPK pathway. The result of activating the MAPK pathway is increased cellular proliferation, whereas activating the PI3K pathway inhibits apoptosis and stimulates protein synthesis. Phosphorylated IRS1 can activate the 85 kDa regulatory subunit of PI3K (PIK3R1), leading to activation of several downstream substrates, including protein AKT/PKB. AKT phosphorylation, in turn, enhances protein synthesis through mTOR activation and triggers the antiapoptotic effects of IGFIR through phosphorylation and inactivation of BAD. In parallel to PI3K-driven signaling, recruitment of Grb2/SOS by phosphorylated IRS1 or Shc leads to recruitment of Ras and activation of the ras-MAPK pathway. In addition to these two main signaling pathways IGF1R signals also through the Janus kinase/signal transducer and activator of transcription pathway (JAK/STAT). Phosphorylation of JAK proteins can lead to phosphorylation/activation of signal transducers and activators of transcription (STAT) proteins. In particular activation of STAT3, may be essential for the transforming activity of IGF1R. The JAK/STAT pathway activates gene transcription and may be responsible for the transforming activity. JNK kinases can also be activated by the IGF1R. IGF1 exerts inhibiting activities on JNK activation via phosphorylation and inhibition of MAP3K5/ASK1, which is able to directly associate with the IGF1R. When present in a hybrid receptor with INSR, binds IGF1. The chain is Insulin-like growth factor 1 receptor (IGF1R) from Sus scrofa (Pig).